We begin with the raw amino-acid sequence, 777 residues long: Acyl-CoA dehydrogenase family member 11 (777 aa).

Residues 501–511 (FCMTEPDVASS), 509–511 (ASS), 535–537 (WSS), and Ser-537 contribute to the FAD site. Ser-511 contacts substrate. 626–629 (GPGR) lines the substrate pocket. FAD-binding positions include Arg-654, Gln-724, and 724–728 (QVCGG). Position 752 (Gly-752) interacts with substrate. FAD contacts are provided by residues 753–755 (PDE) and Glu-755.

The protein belongs to the acyl-CoA dehydrogenase family. In terms of assembly, homodimer. FAD serves as cofactor.

The protein localises to the peroxisome. It localises to the mitochondrion membrane. It carries out the reaction a 2,3-saturated acyl-CoA + oxidized [electron-transfer flavoprotein] + H(+) = a (2E)-enoyl-CoA + reduced [electron-transfer flavoprotein]. The enzyme catalyses docosanoyl-CoA + oxidized [electron-transfer flavoprotein] + H(+) = (2E)-docosenoyl-CoA + reduced [electron-transfer flavoprotein]. The catalysed reaction is tetracosanoyl-CoA + oxidized [electron-transfer flavoprotein] + H(+) = (2E)-tetracosenoyl-CoA + reduced [electron-transfer flavoprotein]. It catalyses the reaction eicosanoyl-CoA + oxidized [electron-transfer flavoprotein] + H(+) = (2E)-eicosenoyl-CoA + reduced [electron-transfer flavoprotein]. It carries out the reaction hexacosanoyl-CoA + oxidized [electron-transfer flavoprotein] + H(+) = (2E)-hexacosenoyl-CoA + reduced [electron-transfer flavoprotein]. The enzyme catalyses tricosanoyl-CoA + oxidized [electron-transfer flavoprotein] + H(+) = (2E)-tricosenoyl-CoA + reduced [electron-transfer flavoprotein]. Its pathway is lipid metabolism; fatty acid beta-oxidation. Acyl-CoA dehydrogenase, that exhibits maximal activity towards saturated C22-CoA. Probably participates in beta-oxydation and energy production but could also play a role in the metabolism of specific fatty acids to control fatty acids composition of cellular lipids in brain. The polypeptide is Acyl-CoA dehydrogenase family member 11 (ACAD11) (Gallus gallus (Chicken)).